We begin with the raw amino-acid sequence, 541 residues long: Tyrosine-protein kinase Yes (541 aa).

A lipid anchor (N-myristoyl glycine) is attached at glycine 2. Cysteine 3 is lipidated: S-palmitoyl cysteine; in membrane form. Tyrosine 32 is subject to Phosphotyrosine. The 62-residue stretch at glycine 89 to serine 150 folds into the SH3 domain. The region spanning tryptophan 156 to cysteine 253 is the SH2 domain. The 254-residue stretch at leucine 275 to phenylalanine 528 folds into the Protein kinase domain. ATP is bound by residues leucine 281–valine 289 and lysine 303. Residues tyrosine 334 and tyrosine 343 each carry the phosphotyrosine modification. The active-site Proton acceptor is the aspartate 394. Position 424 is a phosphotyrosine; by autocatalysis (tyrosine 424). Tyrosine 535 bears the Phosphotyrosine mark.

This sequence belongs to the protein kinase superfamily. Tyr protein kinase family. SRC subfamily. In terms of assembly, interacts with YAP1. Interacts with FASLG. Interacts with CTNND1; this interaction allows YES1-mediated activation of FYN and FER and subsequent phosphorylation of CTNND1. Interacts with CSF1R. Interacts with IL6ST/gp130. Interacts with SCRIB, when YES1 is in a closed conformation; the interaction facilitates YES1 autophosphorylation. In terms of processing, phosphorylated. Phosphorylation by CSK on the C-terminal tail maintains the enzyme in an inactive state. Autophosphorylation at Tyr-424 maintains enzyme activity by blocking CSK-mediated inhibition. Post-translationally, palmitoylation at Cys-3 promotes membrane localization.

It is found in the cell membrane. The protein localises to the cytoplasm. It localises to the cytoskeleton. The protein resides in the microtubule organizing center. Its subcellular location is the centrosome. It is found in the cytosol. The protein localises to the cell junction. The catalysed reaction is L-tyrosyl-[protein] + ATP = O-phospho-L-tyrosyl-[protein] + ADP + H(+). Its function is as follows. Non-receptor protein tyrosine kinase that is involved in the regulation of cell growth and survival, apoptosis, cell-cell adhesion, cytoskeleton remodeling, and differentiation. Stimulation by receptor tyrosine kinases (RTKs) including EGFR, PDGFR, CSF1R and FGFR leads to recruitment of YES1 to the phosphorylated receptor, and activation and phosphorylation of downstream substrates. Upon EGFR activation, promotes the phosphorylation of PARD3 to favor epithelial tight junction assembly. Participates in the phosphorylation of specific junctional components such as CTNND1 by stimulating the FYN and FER tyrosine kinases at cell-cell contacts. Upon T-cell stimulation by CXCL12, phosphorylates collapsin response mediator protein 2/DPYSL2 and induces T-cell migration. Participates in CD95L/FASLG signaling pathway and mediates AKT-mediated cell migration. Plays a role in cell cycle progression by phosphorylating the cyclin dependent kinase 4/CDK4 thus regulating the G1 phase. Also involved in G2/M progression and cytokinesis. Catalyzes phosphorylation of organic cation transporter OCT2 which induces its transport activity. In Mus musculus (Mouse), this protein is Tyrosine-protein kinase Yes (Yes1).